A 481-amino-acid chain; its full sequence is UDP-N-acetylmuramate--L-alanine ligase (481 aa).

115–121 contacts ATP; it reads GTHGKTT.

Belongs to the MurCDEF family.

The protein resides in the cytoplasm. The enzyme catalyses UDP-N-acetyl-alpha-D-muramate + L-alanine + ATP = UDP-N-acetyl-alpha-D-muramoyl-L-alanine + ADP + phosphate + H(+). It participates in cell wall biogenesis; peptidoglycan biosynthesis. Cell wall formation. This is UDP-N-acetylmuramate--L-alanine ligase from Rhodospirillum rubrum (strain ATCC 11170 / ATH 1.1.1 / DSM 467 / LMG 4362 / NCIMB 8255 / S1).